A 2214-amino-acid chain; its full sequence is Non-reducing polyketide synthase dpmpA (2214 aa).

An N-terminal acylcarrier protein transacylase domain (SAT) region spans residues 75–178 (EWIRTGDSHV…LAVCAGAWKD (104 aa)). Residues 372–784 (DESIAIVGAS…GNNTAMIVCQ (413 aa)) form the Ketosynthase family 3 (KS3) domain. Active-site for beta-ketoacyl synthase activity residues include Cys532, His667, and His707. The tract at residues 888 to 1184 (VFAGQTGHRP…AFLSARLGSP (297 aa)) is malonyl-CoA:ACP transacylase (MAT) domain. Catalysis depends on Ser974, which acts as the For acyl/malonyl transferase activity. Residues 1255–1389 (PQLVSVVRSS…GIIKSQEQDR (135 aa)) form an N-terminal hotdog fold region. The PKS/mFAS DH domain occupies 1255 to 1566 (PQLVSVVRSS…FSKVPVRSLQ (312 aa)). The product template (PT) domain stretch occupies residues 1265 to 1560 (GGADPEAAEF…AILGARFSKV (296 aa)). Residues 1416 to 1566 (GASVVQGAFV…FSKVPVRSLQ (151 aa)) form a C-terminal hotdog fold region. Carrier domains are found at residues 1620–1695 (NEVK…HSRL) and 1722–1802 (KAST…SGAD). Ser1654 is modified (O-(pantetheine 4'-phosphoryl)serine). The tract at residues 1698 to 1728 (VPQLSPHDTDRSSDLSAGQPPSTPKASTQEQ) is disordered. A compositionally biased stretch (polar residues) spans 1711-1726 (DLSAGQPPSTPKASTQ). Ser1762 is subject to O-(pantetheine 4'-phosphoryl)serine. Residues 1805-1827 (GFPRTSDNRRSEEGSVGHVGPEK) form a disordered region. Over residues 1810 to 1827 (SDNRRSEEGSVGHVGPEK) the composition is skewed to basic and acidic residues. The segment at 1958–2210 (FPAYRPDHRL…SREADLFRWI (253 aa)) is methyltransferase (CMeT) domain.

Its pathway is secondary metabolite biosynthesis; terpenoid biosynthesis. Its function is as follows. Non-reducing polyketide synthase; part of the gene cluster that mediates the biosynthesis of diterpenoid pyrones. The first step of the pathway is the synthesis of the alpha-pyrone moiety by the polyketide synthase dpmpA via condensation of one acetyl-CoA starter unit with 3 malonyl-CoA units and 2 methylations. The alpha-pyrone is then combined with geranylgeranyl pyrophosphate (GGPP) formed by the GGPP synthase dpmpD through the action of the prenyltransferase dpmpC to yield a linear alpha-pyrone diterpenoid. Subsequent steps in the diterpenoid pyrone biosynthetic pathway involve the decalin core formation, which is initiated by the epoxidation of the C10-C11 olefin by the FAD-dependent oxidoreductase dpmpE, and is followed by a cyclization cascade catalyzed by the terpene cyclase dpmpB. The short chain dehydrogenase/reductase dpmpG then oxidizes the 8S hydroxy group to a ketone and the short chain dehydrogenase/reductase dpmpH reduces the ketone to the 8R hydroxy group to yield higginsianin B. Higginsianin B is further methylated by the methyltransferase dpmpI to produce the intermediate named FDDP B. The cytochrome P450 monooxygenase dpmpJ then oxidizes the C-26 methyl to primary alcohol, producing the final diterpenoid pyrone with a C-26 primary alcohol on the gamma-pyrone moiety named FDDP C. In Macrophomina phaseolina (strain MS6) (Charcoal rot fungus), this protein is Non-reducing polyketide synthase dpmpA.